A 410-amino-acid chain; its full sequence is Regulator of microtubule dynamics protein 2 (410 aa).

Residues 9–28 (LILGIMVGTAGISLLLLWYH) form a helical membrane-spanning segment. Serine 51 carries the post-translational modification Phosphoserine. Positions 68-110 (FQERQLQILEKLNELLTNMEELKEEIRFLKEAIPKLEEYIQDE) form a coiled coil. Serine 121 is subject to Phosphoserine. Residues 122–131 (PQHRARKRRL) are compositionally biased toward basic residues. Positions 122 to 164 (PQHRARKRRLPTIQSSATSNSSEEAESEGGYITANTDTEEQSF) are disordered. The residue at position 139 (threonine 139) is a Phosphothreonine. A Phosphotyrosine modification is found at tyrosine 152. A phosphothreonine mark is found at threonine 154 and threonine 157.

Belongs to the RMDN family. In terms of assembly, interacts with microtubules.

The protein resides in the membrane. Its subcellular location is the cytoplasm. It localises to the cytoskeleton. It is found in the spindle. The protein localises to the spindle pole. This is Regulator of microtubule dynamics protein 2 (RMDN2) from Homo sapiens (Human).